Consider the following 191-residue polypeptide: Cell division protein SepF (191 aa).

The interval 1-77 is disordered; the sequence is MEGQDDYQLL…MGSNVIGLPG (77 aa).

It belongs to the SepF family. Homodimer. Interacts with FtsZ.

It localises to the cytoplasm. Its function is as follows. Cell division protein that is part of the divisome complex and is recruited early to the Z-ring. Probably stimulates Z-ring formation, perhaps through the cross-linking of FtsZ protofilaments. Its function overlaps with FtsA. The sequence is that of Cell division protein SepF from Synechococcus sp. (strain JA-2-3B'a(2-13)) (Cyanobacteria bacterium Yellowstone B-Prime).